The chain runs to 276 residues: Omega-amidase NIT2 (276 aa).

Residues 4 to 248 (FRLALIQLQI…EAIVYSDIDL (245 aa)) form the CN hydrolase domain. Residue Ser-26 is modified to Phosphoserine. Catalysis depends on Glu-43, which acts as the Proton acceptor. Lys-68 carries the N6-acetyllysine; alternate modification. Lys-68 bears the N6-succinyllysine; alternate mark. Residue Lys-112 is the Proton donor of the active site. N6-succinyllysine occurs at positions 123 and 130. The active-site Nucleophile is Cys-153.

As to quaternary structure, homodimer. In terms of tissue distribution, detected in fetal brain (at protein level). Ubiquitous. Detected in heart, brain, placenta, lung, liver, skeletal muscle, kidney, pancreas, prostate, spleen, thymus, prostate, testis, ovary, small intestine and colon.

Its subcellular location is the cytoplasm. The catalysed reaction is a monoamide of a dicarboxylate + H2O = a dicarboxylate + NH4(+). It catalyses the reaction 2-oxoglutaramate + H2O = 2-oxoglutarate + NH4(+). It carries out the reaction 2-oxosuccinamate + H2O = oxaloacetate + NH4(+). Has omega-amidase activity. The role of omega-amidase is to remove potentially toxic intermediates by converting 2-oxoglutaramate and 2-oxosuccinamate to biologically useful 2-oxoglutarate and oxaloacetate, respectively. This is Omega-amidase NIT2 (NIT2) from Homo sapiens (Human).